The following is a 417-amino-acid chain: NADH-quinone oxidoreductase subunit D (417 aa).

The protein belongs to the complex I 49 kDa subunit family. NDH-1 is composed of 14 different subunits. Subunits NuoB, C, D, E, F, and G constitute the peripheral sector of the complex.

Its subcellular location is the cell inner membrane. It catalyses the reaction a quinone + NADH + 5 H(+)(in) = a quinol + NAD(+) + 4 H(+)(out). In terms of biological role, NDH-1 shuttles electrons from NADH, via FMN and iron-sulfur (Fe-S) centers, to quinones in the respiratory chain. The immediate electron acceptor for the enzyme in this species is believed to be ubiquinone. Couples the redox reaction to proton translocation (for every two electrons transferred, four hydrogen ions are translocated across the cytoplasmic membrane), and thus conserves the redox energy in a proton gradient. The polypeptide is NADH-quinone oxidoreductase subunit D (Paraburkholderia xenovorans (strain LB400)).